A 282-amino-acid chain; its full sequence is Protein-glutamine deamidase Cif (282 aa).

Positions M1–T16 are translocation domain (TD). Residues C109, H165, and Q185 contribute to the active site.

The protein belongs to the Cif family.

It localises to the secreted. Its subcellular location is the host nucleus. The catalysed reaction is L-glutaminyl-[protein] + H2O = L-glutamyl-[protein] + NH4(+). Functionally, protein-glutamine deamidase effector that inhibits the host cell cycle and other key cellular processes such as the actin network and programmed-cell death. Acts by mediating the side chain deamidation of 'Gln-40' of host NEDD8, converting it to glutamate, thereby abolishing the activity of cullin-RING-based E3 ubiquitin-protein ligase complexes (CRL complexes). Inactivation of CRL complexes prevents ubiquitination and subsequent degradation of the cyclin-dependent kinase inhibitors CDKN1A/p21 and CDKN1B/p27, leading to G1 and G2 cell cycle arrests in host cells. Also able to catalyze deamidation of 'Gln-40' of host ubiquitin in vitro; however, NEDD8 constitutes the preferred substrate in vivo. The protein is Protein-glutamine deamidase Cif of Escherichia coli.